A 158-amino-acid polypeptide reads, in one-letter code: Small ribosomal subunit protein bS16 (158 aa).

A compositionally biased stretch (low complexity) spans 111–121; the sequence is AAAGLAEAPTK. The tract at residues 111 to 158 is disordered; that stretch reads AAAGLAEAPTKPAKKAPKAEAAPKTEAAPKADAPKTEEQAGAGSGEQG. A compositionally biased stretch (basic and acidic residues) spans 127 to 148; sequence PKAEAAPKTEAAPKADAPKTEE.

Belongs to the bacterial ribosomal protein bS16 family.

This chain is Small ribosomal subunit protein bS16, found in Salinispora arenicola (strain CNS-205).